The chain runs to 213 residues: MKTEDLITMLAAGAGAVEAPSAAQRYALAIGWGAAGATLLMLALLQVRHDLGLALLLPMFWVKVGFVTCLAAGSLFAVLRLSRPGAKTNWVPAALGLPVLGMWAIAAFTLIEAEPMERSNLFFGDTWKSCPLLIAMLSVPVFAAVLRSMKDLAPTRPRLAGFAAGLLAGAVAAVVYCLHCPELGAPFIGFWYLLGMLIPAAVGVLLGNSMLRW.

6 helical membrane-spanning segments follow: residues 27-47, 51-71, 91-111, 126-146, 159-179, and 187-207; these read ALAI…LLQV, LGLA…TCLA, VPAA…FTLI, TWKS…AAVL, LAGF…YCLH, and FIGF…VLLG.

Belongs to the NrsF anti-sigma-F factor family.

The protein resides in the cell inner membrane. Its function is as follows. Probably an anti-sigma factor for extracytoplasmic function (ECF) sigma factor sigma-F (SigF), which responds to (hypo)chlorite. ECF sigma factors are held in an inactive form by a cognate anti-sigma factor. The sequence is that of Probable anti-sigma-F factor NrsF from Azospira oryzae (strain ATCC BAA-33 / DSM 13638 / PS) (Dechlorosoma suillum).